The sequence spans 246 residues: D-erythrulose reductase (246 aa).

Residue 13–41 (LVTGAGKGIGRAVAVALCKAGARVTALSR) coordinates NADP(+). S138 contributes to the substrate binding site. Catalysis depends on Y151, which acts as the Proton acceptor. K155 lines the NADP(+) pocket.

Belongs to the short-chain dehydrogenases/reductases (SDR) family. Homotetramer. The N-terminus is blocked. In terms of tissue distribution, highly expressed in kidney, and also found in high amounts in liver and testis. Low expression seen in all other tissues tested.

Its subcellular location is the cytoplasm. It catalyses the reaction D-threitol + NADP(+) = D-erythrulose + NADPH + H(+). It carries out the reaction xylitol + NADP(+) = L-xylulose + NADPH + H(+). Catalyzes the reduction of D-erythrulose to D-threitol with the concomitant oxidation of NAD(P)H to NAD(P)(+). NADH is less effective than NADPH. May also catalyze the reduction of L-xylulose. This is D-erythrulose reductase (DER) from Gallus gallus (Chicken).